Here is a 311-residue protein sequence, read N- to C-terminus: Oxygen-dependent coproporphyrinogen-III oxidase (311 aa).

Serine 93 contacts substrate. Positions 97 and 107 each coordinate a divalent metal cation. Histidine 107 acts as the Proton donor in catalysis. 109-111 provides a ligand contact to substrate; sequence NVR. A divalent metal cation is bound by residues histidine 153 and histidine 184. Positions 252 to 287 are important for dimerization; the sequence is YVEFNLVFDRGTLFGLQSGGRTESILMSLPPVVKWR. Residue 270–272 participates in substrate binding; it reads GGR.

This sequence belongs to the aerobic coproporphyrinogen-III oxidase family. As to quaternary structure, homodimer. The cofactor is a divalent metal cation.

It localises to the cytoplasm. The enzyme catalyses coproporphyrinogen III + O2 + 2 H(+) = protoporphyrinogen IX + 2 CO2 + 2 H2O. It participates in porphyrin-containing compound metabolism; protoporphyrin-IX biosynthesis; protoporphyrinogen-IX from coproporphyrinogen-III (O2 route): step 1/1. Involved in the heme biosynthesis. Catalyzes the aerobic oxidative decarboxylation of propionate groups of rings A and B of coproporphyrinogen-III to yield the vinyl groups in protoporphyrinogen-IX. This chain is Oxygen-dependent coproporphyrinogen-III oxidase, found in Aromatoleum aromaticum (strain DSM 19018 / LMG 30748 / EbN1) (Azoarcus sp. (strain EbN1)).